Reading from the N-terminus, the 380-residue chain is Cytochrome b (380 aa).

Transmembrane regions (helical) follow at residues 34–54, 78–99, 114–134, and 179–199; these read FGSL…LLAM, WLIR…YLHI, WNTG…GYVL, and FFAL…IHLT. The heme b site is built by His84 and His98. 2 residues coordinate heme b: His183 and His197. An a ubiquinone-binding site is contributed by His202. Transmembrane regions (helical) follow at residues 227–247, 289–309, 321–341, and 348–368; these read LKDF…ALFS, LGGV…PFLH, ISQL…WVGS, and FIII…ILFP.

Belongs to the cytochrome b family. As to quaternary structure, the cytochrome bc1 complex contains 11 subunits: 3 respiratory subunits (MT-CYB, CYC1 and UQCRFS1), 2 core proteins (UQCRC1 and UQCRC2) and 6 low-molecular weight proteins (UQCRH/QCR6, UQCRB/QCR7, UQCRQ/QCR8, UQCR10/QCR9, UQCR11/QCR10 and a cleavage product of UQCRFS1). This cytochrome bc1 complex then forms a dimer. Requires heme b as cofactor.

It is found in the mitochondrion inner membrane. In terms of biological role, component of the ubiquinol-cytochrome c reductase complex (complex III or cytochrome b-c1 complex) that is part of the mitochondrial respiratory chain. The b-c1 complex mediates electron transfer from ubiquinol to cytochrome c. Contributes to the generation of a proton gradient across the mitochondrial membrane that is then used for ATP synthesis. The polypeptide is Cytochrome b (MT-CYB) (Pelecanoides urinatrix (Common diving petrel)).